The following is a 64-amino-acid chain: Conotoxin LiC121 (64 aa).

A signal peptide spans 1 to 22 (MRCVPVFIILLLLSPSAPSVDA). A propeptide spanning residues 23-48 (HPKTKDDVPLASFHDDAKRTLQRLWI) is cleaved from the precursor.

Belongs to the conotoxin T superfamily. Post-translationally, contains 2 disulfide bonds that can be either 'C1-C3, C2-C4' or 'C1-C4, C2-C3', since these disulfide connectivities have been observed for conotoxins with cysteine framework V (for examples, see AC P0DQQ7 and AC P81755). Expressed by the venom duct.

The protein localises to the secreted. This is Conotoxin LiC121 from Conus lividus (Livid cone).